Consider the following 193-residue polypeptide: dTTP/UTP pyrophosphatase (193 aa).

Catalysis depends on aspartate 75, which acts as the Proton acceptor.

The protein belongs to the Maf family. YhdE subfamily. A divalent metal cation serves as cofactor.

The protein resides in the cytoplasm. It carries out the reaction dTTP + H2O = dTMP + diphosphate + H(+). The enzyme catalyses UTP + H2O = UMP + diphosphate + H(+). Nucleoside triphosphate pyrophosphatase that hydrolyzes dTTP and UTP. May have a dual role in cell division arrest and in preventing the incorporation of modified nucleotides into cellular nucleic acids. The chain is dTTP/UTP pyrophosphatase from Chlorobium luteolum (strain DSM 273 / BCRC 81028 / 2530) (Pelodictyon luteolum).